Reading from the N-terminus, the 98-residue chain is Citrate lyase acyl carrier protein (98 aa).

Ser14 carries the post-translational modification O-(phosphoribosyl dephospho-coenzyme A)serine.

This sequence belongs to the CitD family. In terms of assembly, oligomer with a subunit composition of (alpha,beta,gamma)6.

It is found in the cytoplasm. Covalent carrier of the coenzyme of citrate lyase. This is Citrate lyase acyl carrier protein from Citrobacter koseri (strain ATCC BAA-895 / CDC 4225-83 / SGSC4696).